Reading from the N-terminus, the 331-residue chain is ABSCISIC ACID-INSENSITIVE 5-like protein 1 (331 aa).

Phosphoserine is present on residues S40 and S98. T143 carries the phosphothreonine modification. In terms of domain architecture, bZIP spans 247–310; the sequence is MERRQRRMIK…RQEIISRSKQ (64 aa). The segment at 249-268 is basic motif; that stretch reads RRQRRMIKNRESAARSRARR. The leucine-zipper stretch occupies residues 275 to 289; sequence LELELNNLTEENTKL. Basic and acidic residues predominate over residues 296-320; that stretch reads NEKKRRQEIISRSKQVTKEKSGDKL. The segment at 296-331 is disordered; the sequence is NEKKRRQEIISRSKQVTKEKSGDKLRKIRRMASAGW.

It belongs to the bZIP family. ABI5 subfamily. In terms of assembly, DNA-binding heterodimer with AREB3/DPBF3 or EEL/DPBF4. Interacts with the AFP proteins AFP1, AFP2 and AFP3. Predominantly expressed in seeds.

Its subcellular location is the nucleus. Its function is as follows. Could participate in abscisic acid-regulated gene expression during seed development. The sequence is that of ABSCISIC ACID-INSENSITIVE 5-like protein 1 (DPBF2) from Arabidopsis thaliana (Mouse-ear cress).